Reading from the N-terminus, the 449-residue chain is Capsid protein (449 aa).

A DNA-binding region spans residues 1–43; sequence MARRARRPRGRFYAFRRGRWHHLKRLRRRYKFRHRRRQRYRRR. The nuclear localization signals stretch occupies residues 6–47; that stretch reads RRPRGRFYAFRRGRWHHLKRLRRRYKFRHRRRQRYRRRAFRK.

It belongs to the gyrovirus capsid protein family. Homomultimer (Potential). Interacts with Rep; this interaction relocates Rep into the nucleus.

It is found in the host nucleus. It localises to the virion. Its function is as follows. Self-assembles to form the virion icosahedral capsid with a T=1 symmetry. This very small capsid (25 nm in diameter) allows the virus to be very stable in the environment and resistant to some disinfectants, including detergents. Essential for the initial attachment to host receptors. After attachment, the virus is endocytosed and traffics to the nucleus. The capsid protein binds and transports the viral genome and Rep across the nuclear envelope. The chain is Capsid protein (VP1) from Chicken anemia virus (isolate Australia) (CAV).